Here is a 237-residue protein sequence, read N- to C-terminus: UPF0280 protein Mthe_1297 (237 aa).

It belongs to the UPF0280 family.

This chain is UPF0280 protein Mthe_1297, found in Methanothrix thermoacetophila (strain DSM 6194 / JCM 14653 / NBRC 101360 / PT) (Methanosaeta thermophila).